The following is a 396-amino-acid chain: RNA polymerase principal sigma factor HrdA (396 aa).

Basic residues predominate over residues 1–20; it reads MRGGQRRASRLRPPTYRRRP. Residues 1 to 96 are disordered; it reads MRGGQRRASR…PTRTESGGPS (96 aa). 2 stretches are compositionally biased toward low complexity: residues 33–42 and 56–75; these read QTQTLTQTDT and LLAMPAQPGAGAALPHPGAP. Positions 187-200 match the Polymerase core binding motif; that stretch reads DLVQEGNLGLIRAV. The H-T-H motif DNA-binding region spans 357–376; sequence LEEIGRLFGVTRERIRQIES.

This sequence belongs to the sigma-70 factor family. Interacts transiently with the RNA polymerase catalytic core. Interacts with RNA polymerase-binding protein RbpA.

Functionally, sigma factors are initiation factors that promote the attachment of RNA polymerase to specific initiation sites and are then released. The polypeptide is RNA polymerase principal sigma factor HrdA (hrdA) (Streptomyces coelicolor (strain ATCC BAA-471 / A3(2) / M145)).